The chain runs to 230 residues: Cytidylate kinase (230 aa).

12 to 20 (GPSGAGKGT) is a binding site for ATP.

This sequence belongs to the cytidylate kinase family. Type 1 subfamily.

Its subcellular location is the cytoplasm. It catalyses the reaction CMP + ATP = CDP + ADP. It carries out the reaction dCMP + ATP = dCDP + ADP. The polypeptide is Cytidylate kinase (Shewanella sp. (strain W3-18-1)).